Consider the following 259-residue polypeptide: Ribonuclease HII (259 aa).

The region spanning 70–258 (TLIAGIDEVG…VKSLVLGKKE (189 aa)) is the RNase H type-2 domain. The a divalent metal cation site is built by aspartate 76, glutamate 77, and aspartate 168.

The protein belongs to the RNase HII family. Mn(2+) serves as cofactor. Requires Mg(2+) as cofactor.

The protein resides in the cytoplasm. It carries out the reaction Endonucleolytic cleavage to 5'-phosphomonoester.. In terms of biological role, endonuclease that specifically degrades the RNA of RNA-DNA hybrids. The chain is Ribonuclease HII from Streptococcus pneumoniae serotype 4 (strain ATCC BAA-334 / TIGR4).